The chain runs to 330 residues: MTQIINITQSKVISEQILRHVFRHRRLISDTEPCVHQPCSLCLAPHLEKVQYFVEHNEPIHFILPAFPAKSPNTQKVLGTMPDMGEQVSLKFLQSLCDQISEIYAPGAKLTICSDGRVFSDLVGVTDENVTLYGQIIQALLKEMKADAIDVFNLEDMYTDLSFDEMRQKLVKLYGQTIEAIKDAVKNNDHQCQMFNGIHRFLVEDYQVLEAHKSRNKIRLECKTRAYEVIQRSNAWSVLISELYPHSVRLSIHPQHYHSEKIGIHMIKTLDQWGTPWHNATVFDGKEFMLMKRSHLESMGATLVCQNGHPSYFAWTEQPLETRITVQEVI.

This sequence belongs to the isocyanide synthase family.

It catalyses the reaction D-ribulose 5-phosphate + L-tryptophan = (2S)-3-(1H-indol-3-yl)-2-isocyanopropanoate + hydroxyacetone + formaldehyde + phosphate + H2O + H(+). In terms of biological role, involved in the biosynthesis of ambiguines, a family of hapalindole-type alkaloids. Responsible for the synthesis of the isonitrile group on tryptophan using ribulose 5-phosphate as the source of the carbon atom. This chain is L-tryptophan isonitrile synthase AmbI2, found in Fischerella ambigua (strain UTEX 1903).